We begin with the raw amino-acid sequence, 388 residues long: Pregnancy-associated glycoprotein (388 aa).

The first 15 residues, 1 to 15 (MKWFGVLGLVTLSEC), serve as a signal peptide directing secretion. In terms of domain architecture, Peptidase A1 spans 74 to 385 (YMGIISVGTP…DRENDRIGLA (312 aa)). Asp92 is a catalytic residue. 2 disulfides stabilise this stretch: Cys105-Cys110 and Cys266-Cys270. Residue Asp275 is part of the active site. Cys309 and Cys344 are joined by a disulfide. N-linked (GlcNAc...) asparagine glycosylation occurs at Asn356.

The protein belongs to the peptidase A1 family. Trophoblast and placental tissue.

It is found in the secreted. It localises to the extracellular space. In Equus caballus (Horse), this protein is Pregnancy-associated glycoprotein (PAG).